Reading from the N-terminus, the 364-residue chain is MDNYEYSELLKELKNKISNVEAIIKPKILMTRLAEIEKTEQDPALWVDAKKAAQIGREKTKISNILAKFKKAQNELNDAKEFYELAVSENDGETINELFRESAKLSENIANLELSMMLSGENDDKNAIINIHPGAGGTEGEDWAGMLYRMYVRFCERVGYKIEILDFQEGDEAGIKDVNFIVKGENAYGYLKVESGIHRLVRISPFDSAGRRHTSFASVVVSPELDDDIQINIDEKDLRIDYYRSSGAGGQHVNKTESAVRITHIPTNIVVQCQNDRDQHKNKASAMKVLKSRLYELEKLKKQEESNKTPKSDIAWGYQIRNYVLFPYQQVKDLRSNIAYSQAEAILDGDIKKILEDVLINNQS.

The residue at position 251 (glutamine 251) is an N5-methylglutamine.

The protein belongs to the prokaryotic/mitochondrial release factor family. Post-translationally, methylated by PrmC. Methylation increases the termination efficiency of RF2.

Its subcellular location is the cytoplasm. In terms of biological role, peptide chain release factor 2 directs the termination of translation in response to the peptide chain termination codons UGA and UAA. The polypeptide is Peptide chain release factor 2 (Campylobacter hominis (strain ATCC BAA-381 / DSM 21671 / CCUG 45161 / LMG 19568 / NCTC 13146 / CH001A)).